We begin with the raw amino-acid sequence, 45 residues long: Sperm-specific protein Phi-3 (45 aa).

A disordered region spans residues 1–45 (AKAKRSPRKKKAAVKKSSKSKAKKPKSPKKKKAAKKPAKKAAKKK).

Its subcellular location is the nucleus. The protein resides in the chromosome. Involved in nuclear basic protein transition: histones are replaced by spermatid specific proteins which are themselves replaced by protamines in late spermatids. The protein is Sperm-specific protein Phi-3 of Mytilus californianus (California mussel).